Reading from the N-terminus, the 422-residue chain is MNTADLKSFDPEVQSAIDEELGRQRHQIELIASENIVSPAVMAAQGSVMTNKYAEGYPAKRYYGGCEFVDKVEVLAIERAKQLFGCAYANVQPHSGSQANMAAFMAIAPAGSTILGMSLAHGGHLTHGAKVNFSGQIYNAVQYGLNGESERIDFDQVQALAMEHKPAIIVAGASAYSRIIDFAKFREICDAVGAKLVVDMAHFAGLVATGEHPSPFPHADIVTTTTHKTLRGPRGGMILTNDEELAKKINSKIFPGIQGGPLMHVIAAKAVAFKEALSPEFKIYTQQVRKNAVALAEVLVEGGLRIVSGGTDNHLMLVDLTSRDITGKDTEHALERAGLTCNKNAIPNDPRSPFITSGVRLGTPAATTRGFDEEAFRAVGRLIVRVVDAVAASGGAGDPAIEAEVHKEVDALCQKFPIYADI.

Residues Leu119 and 123-125 contribute to the (6S)-5,6,7,8-tetrahydrofolate site; that span reads GHL. Lys228 is modified (N6-(pyridoxal phosphate)lysine). (6S)-5,6,7,8-tetrahydrofolate is bound by residues Glu244 and 352–354; that span reads SPF.

The protein belongs to the SHMT family. In terms of assembly, homodimer. Pyridoxal 5'-phosphate is required as a cofactor.

Its subcellular location is the cytoplasm. The catalysed reaction is (6R)-5,10-methylene-5,6,7,8-tetrahydrofolate + glycine + H2O = (6S)-5,6,7,8-tetrahydrofolate + L-serine. It functions in the pathway one-carbon metabolism; tetrahydrofolate interconversion. It participates in amino-acid biosynthesis; glycine biosynthesis; glycine from L-serine: step 1/1. In terms of biological role, catalyzes the reversible interconversion of serine and glycine with tetrahydrofolate (THF) serving as the one-carbon carrier. This reaction serves as the major source of one-carbon groups required for the biosynthesis of purines, thymidylate, methionine, and other important biomolecules. Also exhibits THF-independent aldolase activity toward beta-hydroxyamino acids, producing glycine and aldehydes, via a retro-aldol mechanism. The chain is Serine hydroxymethyltransferase from Magnetococcus marinus (strain ATCC BAA-1437 / JCM 17883 / MC-1).